A 461-amino-acid polypeptide reads, in one-letter code: METLFNSSVAVSGRDQQSTGFAWWSGNARLINLSGKLLGAHVAHAGLIVFWTGAMTLFEVAHFIPEKPMYEQGLILLPHLATLGWGVGPGGEVIDVYPYFVVGVLHLVSSAVLGFGGLYHAIIGPEVLEESFPFFGYDWKDKNKMTTIIGIHLILLGSGALLLVLKAMFFGGVYDTWAPGGGDVRVISNPTLNPTVIFSYITKSPWGGDGWIVSVDNMEDIIGGHIWLAFICIIGGVWHILTKPFSWARRALVWSGEAYLSYSLAALALMGFIANCFVWFNNTAYPSEFFGPTGPEASQAQAFTFLVRDQRLGANVGSAQGPTGLGKYLMRSPSGEIIFGGETMRFWDTRAPWLEPLRGANGLDLTKIKYDIQPWQERRAAEYMTHAPLGSLNSVGGVATEINSVNYVSPRSWLSTSHFVLGFFLFIGHLWHAGRARAASGGFEKGLDRENEPVLSMKLLD.

A propeptide spanning residues 1-2 (ME) is cleaved from the precursor. T3 is modified (N-acetylthreonine). T3 is modified (phosphothreonine). 5 helical membrane-spanning segments follow: residues 57 to 81 (LFEV…PHLA), 122 to 143 (IIGP…KDKN), 166 to 188 (KAMF…RVIS), 243 to 263 (KPFS…LSYS), and 279 to 300 (WFNN…ASQA). E355 lines the [CaMn4O5] cluster pocket. A helical transmembrane segment spans residues 435 to 459 (RARAASGGFEKGLDRENEPVLSMKL).

Belongs to the PsbB/PsbC family. PsbC subfamily. PSII is composed of 1 copy each of membrane proteins PsbA, PsbB, PsbC, PsbD, PsbE, PsbF, PsbH, PsbI, PsbJ, PsbK, PsbL, PsbM, PsbT, PsbX, PsbY, PsbZ, Psb30/Ycf12, at least 3 peripheral proteins of the oxygen-evolving complex and a large number of cofactors. It forms dimeric complexes. Requires Binds multiple chlorophylls and provides some of the ligands for the Ca-4Mn-5O cluster of the oxygen-evolving complex. It may also provide a ligand for a Cl- that is required for oxygen evolution. PSII binds additional chlorophylls, carotenoids and specific lipids. as cofactor.

It is found in the plastid. The protein resides in the cyanelle thylakoid membrane. Functionally, one of the components of the core complex of photosystem II (PSII). It binds chlorophyll and helps catalyze the primary light-induced photochemical processes of PSII. PSII is a light-driven water:plastoquinone oxidoreductase, using light energy to abstract electrons from H(2)O, generating O(2) and a proton gradient subsequently used for ATP formation. The chain is Photosystem II CP43 reaction center protein from Cyanophora paradoxa.